Consider the following 428-residue polypeptide: D-amino acid dehydrogenase (428 aa).

FAD is bound at residue 3–17; sequence VVILGSGVVGVASAY.

This sequence belongs to the DadA oxidoreductase family. FAD serves as cofactor.

The catalysed reaction is a D-alpha-amino acid + A + H2O = a 2-oxocarboxylate + AH2 + NH4(+). The protein operates within amino-acid degradation; D-alanine degradation; NH(3) and pyruvate from D-alanine: step 1/1. Oxidative deamination of D-amino acids. In Burkholderia vietnamiensis (strain G4 / LMG 22486) (Burkholderia cepacia (strain R1808)), this protein is D-amino acid dehydrogenase.